Consider the following 61-residue polypeptide: Sec-independent protein translocase protein TatA (61 aa).

The helical transmembrane segment at 1–21 (MFGIGMPELIVILVIVLVVFG) threads the bilayer.

The protein belongs to the TatA/E family. In terms of assembly, the Tat system comprises two distinct complexes: a TatABC complex, containing multiple copies of TatA, TatB and TatC subunits, and a separate TatA complex, containing only TatA subunits. Substrates initially bind to the TatABC complex, which probably triggers association of the separate TatA complex to form the active translocon.

The protein resides in the cell inner membrane. Functionally, part of the twin-arginine translocation (Tat) system that transports large folded proteins containing a characteristic twin-arginine motif in their signal peptide across membranes. TatA could form the protein-conducting channel of the Tat system. This is Sec-independent protein translocase protein TatA from Geobacter metallireducens (strain ATCC 53774 / DSM 7210 / GS-15).